A 99-amino-acid polypeptide reads, in one-letter code: Aspartyl/glutamyl-tRNA(Asn/Gln) amidotransferase subunit C (99 aa).

It belongs to the GatC family. Heterotrimer of A, B and C subunits.

The catalysed reaction is L-glutamyl-tRNA(Gln) + L-glutamine + ATP + H2O = L-glutaminyl-tRNA(Gln) + L-glutamate + ADP + phosphate + H(+). It catalyses the reaction L-aspartyl-tRNA(Asn) + L-glutamine + ATP + H2O = L-asparaginyl-tRNA(Asn) + L-glutamate + ADP + phosphate + 2 H(+). Its function is as follows. Allows the formation of correctly charged Asn-tRNA(Asn) or Gln-tRNA(Gln) through the transamidation of misacylated Asp-tRNA(Asn) or Glu-tRNA(Gln) in organisms which lack either or both of asparaginyl-tRNA or glutaminyl-tRNA synthetases. The reaction takes place in the presence of glutamine and ATP through an activated phospho-Asp-tRNA(Asn) or phospho-Glu-tRNA(Gln). The chain is Aspartyl/glutamyl-tRNA(Asn/Gln) amidotransferase subunit C from Mycolicibacterium vanbaalenii (strain DSM 7251 / JCM 13017 / BCRC 16820 / KCTC 9966 / NRRL B-24157 / PYR-1) (Mycobacterium vanbaalenii).